The primary structure comprises 162 residues: NADH-quinone oxidoreductase subunit I (162 aa).

2 consecutive 4Fe-4S ferredoxin-type domains span residues 54–83 and 93–122; these read RRYE…IESE and TRYD…ETQI. Positions 63, 66, 69, 73, 102, 105, 108, and 112 each coordinate [4Fe-4S] cluster.

The protein belongs to the complex I 23 kDa subunit family. NDH-1 is composed of 14 different subunits. Subunits NuoA, H, J, K, L, M, N constitute the membrane sector of the complex. [4Fe-4S] cluster is required as a cofactor.

Its subcellular location is the cell inner membrane. It carries out the reaction a quinone + NADH + 5 H(+)(in) = a quinol + NAD(+) + 4 H(+)(out). Its function is as follows. NDH-1 shuttles electrons from NADH, via FMN and iron-sulfur (Fe-S) centers, to quinones in the respiratory chain. The immediate electron acceptor for the enzyme in this species is believed to be ubiquinone. Couples the redox reaction to proton translocation (for every two electrons transferred, four hydrogen ions are translocated across the cytoplasmic membrane), and thus conserves the redox energy in a proton gradient. The protein is NADH-quinone oxidoreductase subunit I of Burkholderia ambifaria (strain MC40-6).